The following is a 101-amino-acid chain: Floral defensin-like protein 2 (101 aa).

A signal peptide spans 1–25 (MARSICFFAVAILALMLFAAYETEA). Disulfide bonds link C28–C74, C32–C48, C39–C61, C45–C68, and C49–C70. A propeptide spans 75–101 (ATEEATATLANEVKTMAEALVEEDMME) (removed in mature form).

The protein belongs to the DEFL family. When compared to other plant defensins, the petunia defensins have an additional fifth disulfide bond. In terms of tissue distribution, petals.

It is found in the secreted. It localises to the vacuole. Its function is as follows. Plant defense peptide with antifungal activity against F.oxysporum and B.cinerea. This chain is Floral defensin-like protein 2 (D2), found in Petunia hybrida (Petunia).